The chain runs to 752 residues: Ribonucleases P/MRP protein subunit popl-1 (752 aa).

Residues 638–663 are disordered; that stretch reads KTTKRKRVNRKKRESKKRRKIEQEKR. A compositionally biased stretch (basic residues) spans 640–657; the sequence is TKRKRVNRKKRESKKRRK.

Component of nuclear RNase P and RNase MRP ribonucleoproteins. Several subunits of RNase P are also part of the RNase MRP complex.

The protein localises to the nucleus. Its subcellular location is the nucleolus. It carries out the reaction Endonucleolytic cleavage of RNA, removing 5'-extranucleotides from tRNA precursor.. Its function is as follows. Component of ribonuclease P, a ribonucleoprotein complex that generates mature tRNA molecules by cleaving their 5'-ends. Also a component of the MRP ribonuclease complex, which cleaves pre-rRNA sequences. This Caenorhabditis elegans protein is Ribonucleases P/MRP protein subunit popl-1.